The chain runs to 211 residues: Redox-sensing transcriptional repressor Rex (211 aa).

The H-T-H motif DNA-binding region spans 17–56 (LYYRLVSILKGKGIDRVNSKTISEALQIDSATIRRDFSYF). 91-96 (GIGNLG) provides a ligand contact to NAD(+).

The protein belongs to the transcriptional regulatory Rex family. As to quaternary structure, homodimer.

The protein resides in the cytoplasm. In terms of biological role, modulates transcription in response to changes in cellular NADH/NAD(+) redox state. The chain is Redox-sensing transcriptional repressor Rex from Staphylococcus epidermidis (strain ATCC 12228 / FDA PCI 1200).